Consider the following 471-residue polypeptide: FERM domain-containing protein 8 (471 aa).

Disordered regions lie at residues 1 to 23 (MEGD…RGSV), 381 to 416 (AATG…RRQN), and 451 to 471 (TRQA…LEQG). An FERM domain is found at 31-382 (QDLLVYLAND…ELRSVSESAA (352 aa)).

It is found in the cytoplasm. It localises to the cytosol. The protein resides in the cell membrane. Its function is as follows. Promotes the cell surface stability of rhomboid 5 homologs and prevents their degradation via the endolysosomal pathway. By acting on rhomboid 5 homologs, involved in ADAM17-mediated ligand shedding. Negatively regulates the Wnt/beta-catenin signaling pathway. The chain is FERM domain-containing protein 8 (frmd8) from Danio rerio (Zebrafish).